The primary structure comprises 59 residues: MKIIREELKKLSSKIELLEAGMIQEEEISEEEAKELDRLVEETKKNGIPWEKLKAELGL.

This is an uncharacterized protein from Archaeoglobus fulgidus (strain ATCC 49558 / DSM 4304 / JCM 9628 / NBRC 100126 / VC-16).